Here is a 1009-residue protein sequence, read N- to C-terminus: Rho GTPase-activating protein gacT (1009 aa).

Disordered stretches follow at residues 1-72 (MKNI…SRNH) and 89-117 (TSHH…QQTQ). Positions 12-23 (FHKDKKEGDKQD) are enriched in basic and acidic residues. Residues 26–35 (GSSGSSGNSG) show a composition bias toward low complexity. Polar residues predominate over residues 58 to 69 (ESYSGDNSPTLS). Residues 89 to 103 (TSHHSHSHNHNHNHN) show a composition bias toward basic residues. The segment covering 104–117 (HQLTQPIQQQQQTQ) has biased composition (low complexity). A Rho-GAP domain is found at 163–351 (VPLTQVPCRA…EVFPQHHLYY (189 aa)). Disordered stretches follow at residues 388-420 (TISG…DSTA), 432-482 (PEQQ…TFRV), and 508-571 (GPSG…TTDQ). Composition is skewed to low complexity over residues 394–415 (PSNG…ITSP), 432–468 (PEQQ…QPIS), and 512–521 (TTGTTPNGGS). Over residues 522 to 546 (LSIGGGNGGNGGSSLSVGSGGGNGG) the composition is skewed to gly residues. Residues 547 to 557 (SSLSVGSNTSV) show a composition bias toward low complexity. Residues 580–656 (AYTNNEDTKA…IEREIEKKRL (77 aa)) adopt a coiled-coil conformation. Residues 686–713 (ISTIDGSGGSNRNSKNYGNGSSSSSNRR) are disordered. Positions 695-713 (SNRNSKNYGNGSSSSSNRR) are enriched in low complexity. Positions 715-743 (SNTINQQLQMQLQQLQIQQQQYQQTQQSQ) form a coiled coil. The tract at residues 759–781 (TTTTTTTSSGSNRFSSNRYKPVD) is disordered. The segment covering 766-781 (SSGSNRFSSNRYKPVD) has biased composition (polar residues). Residues 839–952 (ENLVLLQQQY…IEEIHLLETY (114 aa)) are a coiled coil. Positions 965 to 1009 (STTKDLLTRSRSPTLPSSINMSTSSLGSSSSSAYNNNNNNNNVPK) are disordered. Residues 967–980 (TKDLLTRSRSPTLP) show a composition bias toward polar residues. The span at 981 to 1009 (SSINMSTSSLGSSSSSAYNNNNNNNNVPK) shows a compositional bias: low complexity.

The protein localises to the cytoplasm. Its function is as follows. Rho GTPase-activating protein involved in the signal transduction pathway. The polypeptide is Rho GTPase-activating protein gacT (gacT) (Dictyostelium discoideum (Social amoeba)).